Consider the following 194-residue polypeptide: Type II restriction enzyme OkrAI (194 aa).

Mg(2+) contacts are provided by Glu-71, Asp-86, and Trp-100. Catalysis depends on Glu-101, which acts as the Proton acceptor.

In terms of assembly, homodimer. Requires Mg(2+) as cofactor.

It carries out the reaction Endonucleolytic cleavage of DNA to give specific double-stranded fragments with terminal 5'-phosphates.. Functionally, a P subtype restriction enzyme that recognizes the double-stranded sequence 5'-GGATCC-3' and cleaves after G-1. The polypeptide is Type II restriction enzyme OkrAI (Oceanobacter kriegii (Oceanospirillum kriegii)).